A 657-amino-acid polypeptide reads, in one-letter code: tRNA 5-methylaminomethyl-2-thiouridine biosynthesis bifunctional protein MnmC (657 aa).

The segment at 1–238 is tRNA (mnm(5)s(2)U34)-methyltransferase; the sequence is MPASTLLQHA…KWEVMSGEYT (238 aa). An FAD-dependent cmnm(5)s(2)U34 oxidoreductase region spans residues 265–657; it reads IGAGLAGSAS…FGLRRLIRGK (393 aa).

It in the N-terminal section; belongs to the methyltransferase superfamily. tRNA (mnm(5)s(2)U34)-methyltransferase family. This sequence in the C-terminal section; belongs to the DAO family. It depends on FAD as a cofactor.

Its subcellular location is the cytoplasm. It catalyses the reaction 5-aminomethyl-2-thiouridine(34) in tRNA + S-adenosyl-L-methionine = 5-methylaminomethyl-2-thiouridine(34) in tRNA + S-adenosyl-L-homocysteine + H(+). Its function is as follows. Catalyzes the last two steps in the biosynthesis of 5-methylaminomethyl-2-thiouridine (mnm(5)s(2)U) at the wobble position (U34) in tRNA. Catalyzes the FAD-dependent demodification of cmnm(5)s(2)U34 to nm(5)s(2)U34, followed by the transfer of a methyl group from S-adenosyl-L-methionine to nm(5)s(2)U34, to form mnm(5)s(2)U34. The chain is tRNA 5-methylaminomethyl-2-thiouridine biosynthesis bifunctional protein MnmC from Pseudomonas putida (strain W619).